The primary structure comprises 258 residues: Translocon-associated protein subunit alpha (258 aa).

Positions 1 to 24 (MMNLRVLFLALLLLASPLLQVARC) are cleaved as a signal peptide. Topologically, residues 25–190 (QSDAEDHSSL…ESGGLLSGES (166 aa)) are lumenal. N-linked (GlcNAc...) asparagine glycans are attached at residues Asn57, Asn119, and Asn127. A helical transmembrane segment spans residues 191–209 (VFLLTLGIGLLLLLGLWAY). Topologically, residues 210-258 (SQVQRLTKKTKKVSKVEVGTRSTEASLDEWLEGTTLAKTSSGKTKNKKN) are cytoplasmic.

It belongs to the TRAP-alpha family. As to quaternary structure, heterotetramer of TRAP-alpha, TRAP-beta, TRAP-delta and TRAP-gamma. Post-translationally, phosphorylated in its cytoplasmic tail.

Its subcellular location is the endoplasmic reticulum membrane. TRAP proteins are part of a complex whose function is to bind calcium to the ER membrane and thereby regulate the retention of ER resident proteins. May be involved in the recycling of the translocation apparatus after completion of the translocation process or may function as a membrane-bound chaperone facilitating folding of translocated proteins. This Arabidopsis thaliana (Mouse-ear cress) protein is Translocon-associated protein subunit alpha.